The chain runs to 374 residues: Protein Brevis radix-like 2 (374 aa).

Disordered regions lie at residues 12 to 43 (NTNNGGSKKQEEDEEEEDRVIETPRSKQIKSL) and 57 to 80 (AYKSCKPCSGSSNQNKNRSYADSD). Over residues 65-80 (SGSSNQNKNRSYADSD) the composition is skewed to polar residues. Positions 143 to 198 (KEWVAQVEPGVLITFVSLPEGGNDMKRIRFSREMFDKWQAQKWWAENFDKVMELYN) constitute a BRX 1 domain. A disordered region spans residues 205 to 316 (QSVPLPTPPR…EELSVSNASD (112 aa)). 2 stretches are compositionally biased toward polar residues: residues 246 to 259 (SSGSLAHQPTTQTQ) and 267 to 288 (GLATTPKLSSISGTKTETSSVD). Basic and acidic residues predominate over residues 289 to 307 (ESARSSFSREEEEADHSGE). The 56-residue stretch at 319-374 (TEWVEQDEAGVYITIRALPDGTRELRRVRFSREKFGETNARLWWEQNRARIQQQYL) folds into the BRX 2 domain.

This sequence belongs to the BRX family. As to expression, expressed in roots.

It is found in the nucleus. This is Protein Brevis radix-like 2 (BRXL2) from Arabidopsis thaliana (Mouse-ear cress).